The primary structure comprises 370 residues: Queuine tRNA-ribosyltransferase (370 aa).

Catalysis depends on aspartate 89, which acts as the Proton acceptor. Substrate contacts are provided by residues 89-93, aspartate 143, glutamine 187, and glycine 214; that span reads DSGGF. An RNA binding region spans residues 245–251; it reads GVGKPED. Residue aspartate 264 is the Nucleophile of the active site. The tract at residues 269 to 273 is RNA binding; important for wobble base 34 recognition; the sequence is TRNAR. Zn(2+) is bound by residues cysteine 302, cysteine 304, cysteine 307, and histidine 333.

Belongs to the queuine tRNA-ribosyltransferase family. As to quaternary structure, homodimer. Within each dimer, one monomer is responsible for RNA recognition and catalysis, while the other monomer binds to the replacement base PreQ1. Zn(2+) is required as a cofactor.

It carries out the reaction 7-aminomethyl-7-carbaguanine + guanosine(34) in tRNA = 7-aminomethyl-7-carbaguanosine(34) in tRNA + guanine. The protein operates within tRNA modification; tRNA-queuosine biosynthesis. Functionally, catalyzes the base-exchange of a guanine (G) residue with the queuine precursor 7-aminomethyl-7-deazaguanine (PreQ1) at position 34 (anticodon wobble position) in tRNAs with GU(N) anticodons (tRNA-Asp, -Asn, -His and -Tyr). Catalysis occurs through a double-displacement mechanism. The nucleophile active site attacks the C1' of nucleotide 34 to detach the guanine base from the RNA, forming a covalent enzyme-RNA intermediate. The proton acceptor active site deprotonates the incoming PreQ1, allowing a nucleophilic attack on the C1' of the ribose to form the product. After dissociation, two additional enzymatic reactions on the tRNA convert PreQ1 to queuine (Q), resulting in the hypermodified nucleoside queuosine (7-(((4,5-cis-dihydroxy-2-cyclopenten-1-yl)amino)methyl)-7-deazaguanosine). This Baumannia cicadellinicola subsp. Homalodisca coagulata protein is Queuine tRNA-ribosyltransferase.